The following is a 318-amino-acid chain: NADH-ubiquinone oxidoreductase chain 1 (318 aa).

The next 8 membrane-spanning stretches (helical) occupy residues 2–22 (FMINILTLILPILLAVAFLTL), 70–90 (MFIIAPVLALALALTMWSPLP), 100–120 (LGVLFMLAMSSLAVYSILWSG), 136–156 (VAQTISYEVTLAIILLSVLLM), 172–192 (LWLLFPSWPLAMMWFISTLAE), 222–242 (LFFLAEYANIIMMNMFTAILF), 253–273 (ELYTTNLIIKTLLLTMSFLWI), and 294–314 (LPLTLALCMWHISLPIMTASI).

The protein belongs to the complex I subunit 1 family. As to quaternary structure, core subunit of respiratory chain NADH dehydrogenase (Complex I) which is composed of 45 different subunits.

It is found in the mitochondrion inner membrane. It carries out the reaction a ubiquinone + NADH + 5 H(+)(in) = a ubiquinol + NAD(+) + 4 H(+)(out). In terms of biological role, core subunit of the mitochondrial membrane respiratory chain NADH dehydrogenase (Complex I) which catalyzes electron transfer from NADH through the respiratory chain, using ubiquinone as an electron acceptor. Essential for the catalytic activity and assembly of complex I. The chain is NADH-ubiquinone oxidoreductase chain 1 (MT-ND1) from Balaenoptera musculus (Blue whale).